The chain runs to 211 residues: Thymidylate kinase (211 aa).

ATP is bound at residue 10 to 17 (GPDGAGKT).

Belongs to the thymidylate kinase family.

The catalysed reaction is dTMP + ATP = dTDP + ADP. Phosphorylation of dTMP to form dTDP in both de novo and salvage pathways of dTTP synthesis. The protein is Thymidylate kinase of Lactococcus lactis subsp. cremoris (strain SK11).